Reading from the N-terminus, the 447-residue chain is MEKNAEKKRIVLVPFPLQGHITPMMQLGQALNLKGFSITVALGDSNRVSSTQHFPGFQFVTIPETIPLSQHEALGVVEFVVTLNKTSETSFKDCIAHLLLQHGNDIACIIYDELMYFSEATAKDLRIPSVIFTTGSATNHVCSCILSKLNAEKFLIDMKDPEVQNMVVENLHPLKYKDLPTSGMGPLERFLEICAEVVNKRTASAVIINTSSCLESSSLSWLKQELSIPVYPLGPLHITTSANFSLLEEDRSCIEWLNKQKLRSVIYISVGSIAHMETKEVLEMAWGLYNSNQPFLWVIRPGTESMPVEVSKIVSERGCIVKWAPQNEVLVHPAVGGFWSHCGWNSTLESIVEGVPMICRPFNGEQKLNAMYIESVWRVGVLLQGEVERGCVERAVKRLIVDDEGVGMRERALVLKEKLNASVRSGGSSYNALDELVHYLEAEYRNT.

UDP-alpha-D-glucose contacts are provided by residues Ser272, 324-326, 341-349, and 363-366; these read APQ, HCGWNSTLE, and NGEQ.

Belongs to the UDP-glycosyltransferase family.

This chain is UDP-glycosyltransferase 76E5 (UGT76E5), found in Arabidopsis thaliana (Mouse-ear cress).